We begin with the raw amino-acid sequence, 494 residues long: Ketol-acid reductoisomerase (NADP(+)) (494 aa).

The 195-residue stretch at 14-208 folds into the KARI N-terminal Rossmann domain; it reads LDQLGRCRFM…GGHRAGCLES (195 aa). NADP(+)-binding positions include 45 to 48, Arg-68, Arg-76, Ser-78, and 108 to 110; these read CGAQ and DKQ. His-132 is a catalytic residue. Gly-158 lines the NADP(+) pocket. KARI C-terminal knotted domains are found at residues 209-344 and 345-487; these read SFVA…NYPE and SDVE…MSDM. The Mg(2+) site is built by Asp-217, Glu-221, Glu-389, and Glu-393. Ser-414 provides a ligand contact to substrate.

Belongs to the ketol-acid reductoisomerase family. Mg(2+) is required as a cofactor.

It catalyses the reaction (2R)-2,3-dihydroxy-3-methylbutanoate + NADP(+) = (2S)-2-acetolactate + NADPH + H(+). The enzyme catalyses (2R,3R)-2,3-dihydroxy-3-methylpentanoate + NADP(+) = (S)-2-ethyl-2-hydroxy-3-oxobutanoate + NADPH + H(+). Its pathway is amino-acid biosynthesis; L-isoleucine biosynthesis; L-isoleucine from 2-oxobutanoate: step 2/4. It functions in the pathway amino-acid biosynthesis; L-valine biosynthesis; L-valine from pyruvate: step 2/4. Functionally, involved in the biosynthesis of branched-chain amino acids (BCAA). Catalyzes an alkyl-migration followed by a ketol-acid reduction of (S)-2-acetolactate (S2AL) to yield (R)-2,3-dihydroxy-isovalerate. In the isomerase reaction, S2AL is rearranged via a Mg-dependent methyl migration to produce 3-hydroxy-3-methyl-2-ketobutyrate (HMKB). In the reductase reaction, this 2-ketoacid undergoes a metal-dependent reduction by NADPH to yield (R)-2,3-dihydroxy-isovalerate. This chain is Ketol-acid reductoisomerase (NADP(+)), found in Aliivibrio fischeri (strain ATCC 700601 / ES114) (Vibrio fischeri).